A 495-amino-acid chain; its full sequence is UDP-N-acetylmuramate--L-alanine ligase (495 aa).

153 to 159 (GTHGKTT) lines the ATP pocket.

It belongs to the MurCDEF family.

It localises to the cytoplasm. The catalysed reaction is UDP-N-acetyl-alpha-D-muramate + L-alanine + ATP = UDP-N-acetyl-alpha-D-muramoyl-L-alanine + ADP + phosphate + H(+). Its pathway is cell wall biogenesis; peptidoglycan biosynthesis. Functionally, cell wall formation. The polypeptide is UDP-N-acetylmuramate--L-alanine ligase (Gloeothece citriformis (strain PCC 7424) (Cyanothece sp. (strain PCC 7424))).